Here is a 120-residue protein sequence, read N- to C-terminus: Succinate dehydrogenase assembly factor 3, mitochondrial (120 aa).

The transit peptide at 1-36 (MSRILMSQLTHPQRVRLLYKTILRLHRGLPAELRAL) directs the protein to the mitochondrion.

The protein belongs to the complex I LYR family. SDHAF3 subfamily. Interacts with SdhB within an SdhA-SdhB subcomplex.

Its subcellular location is the mitochondrion matrix. Functionally, plays an essential role in the assembly of succinate dehydrogenase (SDH), an enzyme complex (also referred to as respiratory complex II) that is a component of both the tricarboxylic acid (TCA) cycle and the mitochondrial electron transport chain, and which couples the oxidation of succinate to fumarate with the reduction of ubiquinone (coenzyme Q) to ubiquinol. Promotes maturation of the iron-sulfur protein subunit SdhB of the SDH catalytic dimer, protecting it from the deleterious effects of oxidants. In Drosophila melanogaster (Fruit fly), this protein is Succinate dehydrogenase assembly factor 3, mitochondrial.